A 389-amino-acid polypeptide reads, in one-letter code: MGWWRKKKKPKSEIASERGAKLLKDLIECCDGKSNPIKFFSADEIRKATNNFGVSNLVSELSHDFDYKWYSGKNENHDMILVRKAFSQSVYYKDTFFRDIAVSSMVSGHKNFLKLIGYCLEFEEPVMVYHGVKKHYHLESSEQPWKRRMKIAEDIATALAYLHTAFPRPFVYRCLSLTNILLDEDGVAKLMDFSFCVSIPEGETFVQVDYIAGTVDYLKPNYLKHGVVSEETDVFAVGHSMQMLLMGEKIFDRIMRRPFPTSKFMEEPKMDEIADPEMGEISEEELCQMKAFLLLSLRCTGHVGEVPTMVEVAKELKSIQRCLHNDTFSPSVETQFDSHQDISSSVILSNQTKDTRALLRCIACHVFDEMFQWVMMNWFRFFRRNRRIC.

Residues 41 to 342 (SADEIRKATN…ETQFDSHQDI (302 aa)) form the Protein kinase domain. ATP contacts are provided by residues 47 to 55 (KATNNFGVS) and K84. Residue Y129 is modified to Phosphotyrosine. A Phosphothreonine modification is found at T214. Residue Y222 is modified to Phosphotyrosine.

It belongs to the protein kinase superfamily. Ser/Thr protein kinase family.

Functionally, together with RPP13L4/ZAR1, involved in the regulation of the ambient temperature-sensitive intersection of growth and immune response in the absence of pathogens. In Arabidopsis thaliana (Mouse-ear cress), this protein is Inactive serine/threonine-protein kinase ZRK12.